A 151-amino-acid polypeptide reads, in one-letter code: Type 4 adapter protein IcmW (151 aa).

As to quaternary structure, the T4BSS is a complex nanomachine composed of several subcomplexes. This subunit is part of the Type IV Coupling Complex (T4CC), a subcomplex composed of the DotLMNYZ core and the IcmSW-LvgA adapter subunits, linked by the C-terminal tail of DotL. Interacts with IcmS. IcmS and IcmW form a stable complex. Interaction with IcmS greatly enhances the stability of IcmW. Interacts directly with the type 4 coupling protein DotL. Interacts with LvgA. Interacts with effector proteins.

The protein localises to the cytoplasm. Interaction with DotL is critical for the export of IcmSW-dependent substrates. In terms of biological role, component of the Dot/Icm type IVB secretion system (T4BSS), which is used to inject bacterial effector proteins into eukaryotic host cells. Part of a subcomplex which recruits effector proteins and delivers them to the core transmembrane subcomplex. The IcmS/IcmW protein complex plays an important role in protein translocation by interacting with multiple Dot/Icm effector proteins to facilitate their translocation into host cells. Interaction promotes conformational changes in the effector protein, which may facilitate display of a C-terminal translocation signal. May maintain the substrates in a translocation competent form. Required for intracellular growth in host cells, replicative phagosome formation and phagosome trafficking. The protein is Type 4 adapter protein IcmW of Legionella pneumophila subsp. pneumophila (strain Philadelphia 1 / ATCC 33152 / DSM 7513).